Reading from the N-terminus, the 2231-residue chain is Helicase SEN1 (2231 aa).

Residues 1–17 (MNSNNPDNNNSNNINNN) are compositionally biased toward low complexity. 2 disordered regions span residues 1–24 (MNSN…KDIA) and 1032–1061 (HPPS…SDND). Residues Q1339 and 1360–1364 (GTGKT) contribute to the ATP site. Residues 1491–1511 (ELRGKLDSESGNPESPMSTED) are disordered. Residues 1499 to 1510 (ESGNPESPMSTE) are compositionally biased toward polar residues. Residues Q1619, Y1655, and E1787 each contribute to the ATP site. Disordered regions lie at residues 1894-1993 (ITQG…AVVG) and 2032-2231 (QLGL…KPRS). Residues 1909–1927 (KRRVVDEGEEADKAVKKKK) carry the Nuclear localization signal motif. Positions 1923–1937 (VKKKKKEKKKEKKKS) are enriched in basic residues. Residues 1938–1950 (KADDKKKNNKKAE) show a composition bias toward basic and acidic residues. Residues 2048–2058 (NNEDDDDEDDY) show a composition bias toward acidic residues. 2 stretches are compositionally biased toward polar residues: residues 2060 to 2088 (PSIS…NFSA) and 2095 to 2104 (QVSQAKQTQV). Residues 2114–2123 (SNSVLSGGSS) show a composition bias toward low complexity. Residues 2134–2160 (PNQNGQNGANRTLSQHVGNANQYSTAP) show a composition bias toward polar residues. A compositionally biased stretch (low complexity) spans 2210–2220 (RNSSRRNASSS).

This sequence belongs to the DNA2/NAM7 helicase family. In terms of assembly, interacts with RAD2, RNT1 and RPB1. Binds to multiple snoRNAs.

The protein resides in the nucleus. Functionally, ATP-dependent 5'-&gt;3' DNA/RNA helicase required for the expression and maturation of diverse classes of non-protein-coding RNAs like precursor tRNAs, rRNAs and small nuclear (snRNA) and nucleolar (snoRNA) RNAs. Directs RNA polymerase II transcription termination on snoRNAs as well as on several short protein-coding genes. May also play a role in transcription-coupled nucleotide excision repair. This Saccharomyces cerevisiae (strain ATCC 204508 / S288c) (Baker's yeast) protein is Helicase SEN1 (SEN1).